A 175-amino-acid polypeptide reads, in one-letter code: Adenine phosphoribosyltransferase (175 aa).

This sequence belongs to the purine/pyrimidine phosphoribosyltransferase family. As to quaternary structure, homodimer.

It is found in the cytoplasm. The enzyme catalyses AMP + diphosphate = 5-phospho-alpha-D-ribose 1-diphosphate + adenine. It functions in the pathway purine metabolism; AMP biosynthesis via salvage pathway; AMP from adenine: step 1/1. Catalyzes a salvage reaction resulting in the formation of AMP, that is energically less costly than de novo synthesis. This is Adenine phosphoribosyltransferase from Pelagibacter ubique (strain HTCC1062).